We begin with the raw amino-acid sequence, 1452 residues long: Receptor-type tyrosine-protein phosphatase mu (1452 aa).

Residues 1 to 20 form the signal peptide; sequence MRTLGTCLVTLAGLLLTAAG. Topologically, residues 21–742 are extracellular; sequence ETFSGGCLFD…PEKQTDHTVK (722 aa). The MAM domain occupies 22–184; the sequence is TFSGGCLFDE…VKVLGHPCTR (163 aa). Cysteines 27 and 36 form a disulfide. 4 N-linked (GlcNAc...) asparagine glycosylation sites follow: Asn-72, Asn-92, Asn-131, and Asn-249. 2 disulfide bridges follow: Cys-96-Cys-182 and Cys-206-Cys-260. The Ig-like C2-type domain occupies 186-277; sequence PHFLRIQNVE…VGISNYAELV (92 aa). Fibronectin type-III domains lie at 284–379, 382–480, 481–587, and 589–671; these read PIAP…CADP, GPRK…TDED, LPGA…SAPS, and PAYE…DSLQ. 8 N-linked (GlcNAc...) asparagine glycosylation sites follow: Asn-406, Asn-414, Asn-454, Asn-534, Asn-544, Asn-598, Asn-651, and Asn-681. A helical membrane pass occupies residues 743-764; sequence IAGVIAGILLFVIIFLGVVLVM. Topologically, residues 765–1452 are cytoplasmic; it reads KKRKLAKKRK…EVALEYLNSG (688 aa). Ser-821 is modified (phosphoserine). 2 consecutive Tyrosine-protein phosphatase domains span residues 900 to 1154 and 1186 to 1448; these read FKEE…ILEA and IKEE…ALEY. Substrate-binding positions include Asp-1063, 1095–1101, and Gln-1139; that span reads CSAGAGR. The active-site Phosphocysteine intermediate is Cys-1095. The Phosphocysteine intermediate role is filled by Cys-1389.

The protein belongs to the protein-tyrosine phosphatase family. Receptor class 2B subfamily. Homodimer. As to expression, most abundant in lung, less in brain and heart.

It is found in the cell membrane. The enzyme catalyses O-phospho-L-tyrosyl-[protein] + H2O = L-tyrosyl-[protein] + phosphate. Its function is as follows. Receptor protein-tyrosine phosphatase that mediates homotypic cell-cell interactions and plays a role in adipogenic differentiation via modulation of p120 catenin/CTNND1 phosphorylation. Promotes CTNND1 dephosphorylation and prevents its cytoplasmic localization where it inhibits SLC2A4 membrane trafficking. In turn, SLC2A4 is directed to the plasma membrane and performs its glucose transporter function. In Mus musculus (Mouse), this protein is Receptor-type tyrosine-protein phosphatase mu (Ptprm).